A 303-amino-acid chain; its full sequence is Probable endonuclease 4 (303 aa).

His78, His118, Glu154, Asp188, His191, His222, Asp235, His237, and Glu267 together coordinate Zn(2+).

Belongs to the AP endonuclease 2 family. Requires Zn(2+) as cofactor.

The enzyme catalyses Endonucleolytic cleavage to 5'-phosphooligonucleotide end-products.. In terms of biological role, endonuclease IV plays a role in DNA repair. It cleaves phosphodiester bonds at apurinic or apyrimidinic (AP) sites, generating a 3'-hydroxyl group and a 5'-terminal sugar phosphate. The sequence is that of Probable endonuclease 4 from Mycoplasmoides gallisepticum (strain R(low / passage 15 / clone 2)) (Mycoplasma gallisepticum).